The primary structure comprises 365 residues: Aminomethyltransferase (365 aa).

The protein belongs to the GcvT family. The glycine cleavage system is composed of four proteins: P, T, L and H.

It catalyses the reaction N(6)-[(R)-S(8)-aminomethyldihydrolipoyl]-L-lysyl-[protein] + (6S)-5,6,7,8-tetrahydrofolate = N(6)-[(R)-dihydrolipoyl]-L-lysyl-[protein] + (6R)-5,10-methylene-5,6,7,8-tetrahydrofolate + NH4(+). In terms of biological role, the glycine cleavage system catalyzes the degradation of glycine. This is Aminomethyltransferase from Halalkalibacterium halodurans (strain ATCC BAA-125 / DSM 18197 / FERM 7344 / JCM 9153 / C-125) (Bacillus halodurans).